Reading from the N-terminus, the 206-residue chain is LexA repressor (206 aa).

The segment at residues 28 to 48 (RAEIARELGFRSANAAEEHLK) is a DNA-binding region (H-T-H motif). Catalysis depends on for autocatalytic cleavage activity residues Ser-123 and Lys-160.

Belongs to the peptidase S24 family. Homodimer.

The enzyme catalyses Hydrolysis of Ala-|-Gly bond in repressor LexA.. Represses a number of genes involved in the response to DNA damage (SOS response), including recA and lexA. In the presence of single-stranded DNA, RecA interacts with LexA causing an autocatalytic cleavage which disrupts the DNA-binding part of LexA, leading to derepression of the SOS regulon and eventually DNA repair. The sequence is that of LexA repressor from Vibrio atlanticus (strain LGP32) (Vibrio splendidus (strain Mel32)).